A 417-amino-acid polypeptide reads, in one-letter code: Phosphoglycerate kinase 1 (417 aa).

At Ser-2 the chain carries N-acetylserine. Phosphoserine occurs at positions 2 and 4. Residue Lys-6 is modified to N6-succinyllysine. Lys-11 bears the N6-acetyllysine mark. 6 residues coordinate (2R)-3-phosphoglycerate: Val-23, Asp-24, Phe-25, Asn-26, Gln-38, and Arg-39. The mitochondrial targeting region exposed following cis-trans isomerization by PIN1 and recognized by the TOM complex for mitochondrial translocation of the protein stretch occupies residues 38–43 (QRIKAA). The residue at position 48 (Lys-48) is an N6-acetyllysine; alternate. Position 48 is an N6-succinyllysine; alternate (Lys-48). Ser-62, His-63, Gly-65, and Arg-66 together coordinate (2R)-3-phosphoglycerate. N6-acetyllysine is present on Lys-75. Position 76 is a phosphotyrosine (Tyr-76). N6-acetyllysine is present on residues Lys-86 and Lys-91. Residue Lys-97 is modified to N6-acetyllysine; alternate. Residue Lys-97 is modified to N6-(2-hydroxyisobutyryl)lysine; alternate. Positions 122 and 123 each coordinate (2R)-3-phosphoglycerate. At Lys-131 the chain carries N6-acetyllysine; alternate. Position 131 is an N6-malonyllysine; alternate (Lys-131). Lys-146 carries the post-translational modification N6-acetyllysine. The (2R)-3-phosphoglycerate site is built by His-170 and Arg-171. An N6-succinyllysine modification is found at Lys-191. Tyr-196 carries the phosphotyrosine modification. Lys-199 carries the post-translational modification N6-acetyllysine. Residue Ser-203 is modified to Phosphoserine. An ADP-binding site is contributed by Gly-214. Residue Gly-214 participates in CDP binding. Residues Ala-215 and Lys-216 each contribute to the AMP site. ATP is bound at residue Ala-215. Ala-215 serves as a coordination point for Mg(2+). Lys-216 bears the N6-(2-hydroxyisobutyryl)lysine mark. Residues Ala-218 and Asp-219 each coordinate Mg(2+). CDP is bound at residue Asp-219. Lys-220 lines the AMP pocket. Lys-220 contributes to the ATP binding site. Lys-220 is modified (N6-(2-hydroxyisobutyryl)lysine). Gly-238 serves as a coordination point for ADP. Gly-238 contributes to the CDP binding site. Gly-239 serves as a coordination point for AMP. Gly-239 contacts ATP. Lys-267 and Lys-291 each carry N6-acetyllysine. Gly-313 is an AMP binding site. Residue Gly-313 coordinates ATP. Lys-323 is subject to N6-(2-hydroxyisobutyryl)lysine. CDP is bound by residues Gly-338, Val-340, and Phe-343. Residue Phe-343 participates in ADP binding. Glu-344 lines the AMP pocket. Glu-344 serves as a coordination point for ATP. Lys-361 carries the N6-acetyllysine modification. ATP is bound by residues Asp-375 and Thr-376. Asp-375 is a binding site for Mg(2+).

This sequence belongs to the phosphoglycerate kinase family. Monomer. Interacts with kinase MAPK1/ERK2; the interaction is direct, occurs under hypoxic conditions, and promotes its interaction with PIN1. Interacts with peptidyl-prolyl cis-trans isomerase PIN1; the interaction is direct, occurs under hypoxic conditions, and targets the protein to the mitochondrion by promoting interactions with the TOM complex. Interacts with mitochondrial circRNA mcPGK1 (via its 2nd stem-loop); the interaction is direct and targets the protein to the mitochondrion by promoting interactions with the TOM complex. Interacts with pyruvate dehydrogenase kinase PDK1; the interaction is direct, occurs under hypoxic conditions and leads to PDK1-mediated inhibition of pyruvate dehydrogenase complex activity. Mg(2+) is required as a cofactor. In terms of processing, phosphorylated at Ser-203 by MAPK1/ERK2 under hypoxic conditions, which promotes its mitochondrial targeting.

It is found in the cytoplasm. It localises to the cytosol. The protein localises to the mitochondrion matrix. It catalyses the reaction (2R)-3-phosphoglycerate + ATP = (2R)-3-phospho-glyceroyl phosphate + ADP. It carries out the reaction L-seryl-[protein] + ATP = O-phospho-L-seryl-[protein] + ADP + H(+). The protein operates within carbohydrate degradation; glycolysis; pyruvate from D-glyceraldehyde 3-phosphate: step 2/5. Catalyzes one of the two ATP producing reactions in the glycolytic pathway via the reversible conversion of 1,3-diphosphoglycerate to 3-phosphoglycerate. Both L- and D- forms of purine and pyrimidine nucleotides can be used as substrates, but the activity is much lower on pyrimidines. In addition to its role as a glycolytic enzyme, it seems that PGK-1 acts as a polymerase alpha cofactor protein (primer recognition protein). Acts as a protein kinase when localized to the mitochondrion where it phosphorylates pyruvate dehydrogenase kinase PDK1 to inhibit pyruvate dehydrogenase complex activity and suppress the formation of acetyl-coenzyme A from pyruvate, and consequently inhibit oxidative phosphorylation and promote glycolysis. May play a role in sperm motility. The chain is Phosphoglycerate kinase 1 (PGK1) from Cricetulus griseus (Chinese hamster).